A 307-amino-acid polypeptide reads, in one-letter code: MVTSSSSPPLATSQLPVMKGEEKPSNWAELPPDLLSSILLRLSPLEILENARKVCRSWRRVSKDPLIWRRIDMRNLRRLYCIYAMEACCRHVVDLSQGGLLEFNIDQWRFQTTSLLNYMAERSSNLRRLRVKGGQITSVGIFEAIVKLPLLEELELLYCSIEEEHFKTIGQACPNLKTLKLVGFWSHLNESDNDALAIADTMPGLLHLQLISNGLTNIGLNAILDGCPHLECLDLRQCFNINLFGDLERQCLERIKDFRCPNDVLDDYNYVIFSDNGSIEDEKGEEEENYSYGSDDTEYGYRRSADF.

The segment covering 1 to 15 (MVTSSSSPPLATSQL) has biased composition (polar residues). The disordered stretch occupies residues 1–26 (MVTSSSSPPLATSQLPVMKGEEKPSN). The F-box domain maps to 24–71 (PSNWAELPPDLLSSILLRLSPLEILENARKVCRSWRRVSKDPLIWRRI). LRR repeat units follow at residues 108-133 (WRFQTTSLLNYMAERSSNLRRLRVKG), 158-183 (YCSIEEEHFKTIGQACPNLKTLKLVG), 185-210 (WSHLNESDNDALAIADTMPGLLHLQL), 212-237 (SNGLTNIGLNAILDGCPHLECLDLRQ), and 244-270 (FGDLERQCLERIKDFRCPNDVLDDYNY). Residues 279–289 (IEDEKGEEEEN) show a composition bias toward acidic residues. Residues 279 to 307 (IEDEKGEEEENYSYGSDDTEYGYRRSADF) are disordered.

This chain is Putative F-box/LRR-repeat protein 22 (FBL22), found in Arabidopsis thaliana (Mouse-ear cress).